A 577-amino-acid polypeptide reads, in one-letter code: Protein GPR108 (577 aa).

The signal sequence occupies residues 1–34 (MAVSERRGLSGESPAQCRWEYLSLLVLMLSGCSG). N-linked (GlcNAc...) asparagine glycosylation is found at asparagine 59 and asparagine 111. The tract at residues 144–224 (LLPEAPSQSG…TRGPSGKEKD (81 aa)) is disordered. Residues asparagine 233 and asparagine 237 are each glycosylated (N-linked (GlcNAc...) asparagine). 7 helical membrane passes run 296-316 (LYLI…SVLC), 325-345 (IHWL…FHSI), 369-389 (LLKG…WAFV), 400-420 (IFGI…VIES), 434-454 (ILFL…VWSI), 482-502 (VMVI…RVAV), and 506-526 (WQWL…VLTG).

This sequence belongs to the LU7TM family.

The protein resides in the golgi apparatus. Its subcellular location is the cis-Golgi network membrane. It localises to the trans-Golgi network membrane. The protein localises to the golgi apparatus membrane. In terms of biological role, may play a role in intracellular immune modulation by activating NF-kappaB response and attenuating Toll-like-receptor response. The protein is Protein GPR108 (Gpr108) of Rattus norvegicus (Rat).